The primary structure comprises 225 residues: Putative membrane protease YugP (225 aa).

His-95 is a Zn(2+) binding site. Residue Glu-96 is part of the active site. Zn(2+)-binding residues include His-99 and His-103. 3 helical membrane passes run Ile-116–Gly-138, Leu-140–Pro-162, and Val-192–Leu-212.

It localises to the cell membrane. This chain is Putative membrane protease YugP (yugP), found in Bacillus subtilis (strain 168).